We begin with the raw amino-acid sequence, 1097 residues long: DNA-directed RNA polymerase subunit beta (1097 aa).

Positions 1072-1097 (QDVNPRRSTPSRPTYESLGVADYDED) are disordered.

The protein belongs to the RNA polymerase beta chain family. In cyanobacteria the RNAP catalytic core is composed of 2 alpha, 1 beta, 1 beta', 1 gamma and 1 omega subunit. When a sigma factor is associated with the core the holoenzyme is formed, which can initiate transcription.

It carries out the reaction RNA(n) + a ribonucleoside 5'-triphosphate = RNA(n+1) + diphosphate. Its function is as follows. DNA-dependent RNA polymerase catalyzes the transcription of DNA into RNA using the four ribonucleoside triphosphates as substrates. The sequence is that of DNA-directed RNA polymerase subunit beta from Synechococcus sp. (strain WH7803).